The chain runs to 481 residues: Acyl-CoA ligase cnsG (481 aa).

A PTS2-type peroxisomal targeting signal motif is present at residues 3 to 11 (SPQLPPSMK). ATP-binding positions include 124-132 (KSGTTGNPK), 263-268 (NGYGMT), D353, and R368. Position 268 (T268) interacts with substrate. Residues 376–378 (GGL) and 446–448 (AIF) each bind CoA. K466 provides a ligand contact to ATP.

Belongs to the ATP-dependent AMP-binding enzyme family.

It participates in alkaloid biosynthesis. In terms of biological role, acyl-CoA ligase; part of the gene cluster that mediates the biosynthesis of communesins, a prominent class of indole alkaloids with great potential as pharmaceuticals. Communesins are biosynthesized by the coupling of tryptamine and aurantioclavine, two building blocks derived from L-tryptophan. The L-tryptophan decarboxylase cnsB converts L-tryptophan to tryptamine, whereas the tryptophan dimethylallyltransferase cnsF converts L-tryptophan to 4-dimethylallyl tryptophan which is further transformed to aurantioclavine by the aurantioclavine synthase cnsA, probably aided by the catalase cnsD. The cytochrome P450 monooxygenase cnsC catalyzes the heterodimeric coupling between the two different indole moieties, tryptamine and aurantioclavine, to construct vicinal quaternary stereocenters and yield the heptacyclic communesin scaffold. The O-methyltransferase cnsE then methylates the communesin scaffold to produce communesin K, the simplest characterized communesin that contains the heptacyclic core. The dioxygenase cnsJ converts communesin K into communesin I. Acylation to introduce the hexadienyl group at position N16 of communesin I by the acyltransferase cnsK leads to the production of communesin B. The hexadienyl group is produced by the highly reducing polyketide synthase cnsI, before being hydrolytically removed from cnsI by the serine hydrolase cnsH, converted into hexadienyl-CoA by the CoA ligase cnsG, and then transferred to communesin I by cnsK. Surprisingly, cnsK may also be a promiscuous acyltransferase that can tolerate a range of acyl groups, including acetyl-, propionyl-, and butyryl-CoA, which lead to communesins A, G and H respectively. The roles of the alpha-ketoglutarate-dependent dioxygenases cnsM and cnsP have still to be determined. This Penicillium expansum (Blue mold rot fungus) protein is Acyl-CoA ligase cnsG.